A 188-amino-acid polypeptide reads, in one-letter code: Ribosome-recycling factor (188 aa).

This sequence belongs to the RRF family.

It localises to the cytoplasm. Its function is as follows. Responsible for the release of ribosomes from messenger RNA at the termination of protein biosynthesis. May increase the efficiency of translation by recycling ribosomes from one round of translation to another. This is Ribosome-recycling factor from Cereibacter sphaeroides (strain ATCC 17025 / ATH 2.4.3) (Rhodobacter sphaeroides).